Reading from the N-terminus, the 503-residue chain is Ribose import ATP-binding protein RbsA (503 aa).

ABC transporter domains lie at Leu-10–Asp-246 and Val-256–Glu-500. Gly-42–Ser-49 is a binding site for ATP.

Belongs to the ABC transporter superfamily. Ribose importer (TC 3.A.1.2.1) family. In terms of assembly, the complex is composed of an ATP-binding protein (RbsA), two transmembrane proteins (RbsC) and a solute-binding protein (RbsB).

Its subcellular location is the cell membrane. It catalyses the reaction D-ribose(out) + ATP + H2O = D-ribose(in) + ADP + phosphate + H(+). In terms of biological role, part of the ABC transporter complex RbsABC involved in ribose import. Responsible for energy coupling to the transport system. This Rhodococcus jostii (strain RHA1) protein is Ribose import ATP-binding protein RbsA.